We begin with the raw amino-acid sequence, 327 residues long: Undecaprenyl-phosphate 4-deoxy-4-formamido-L-arabinose transferase (327 aa).

2 helical membrane-spanning segments follow: residues 235-255 and 270-290; these read LLSLVGSAIALLGFTFSVLLV and VFTLFAVLFMFIGAQFVGMGL.

The protein belongs to the glycosyltransferase 2 family.

The protein localises to the cell inner membrane. The catalysed reaction is UDP-4-deoxy-4-formamido-beta-L-arabinose + di-trans,octa-cis-undecaprenyl phosphate = 4-deoxy-4-formamido-alpha-L-arabinopyranosyl di-trans,octa-cis-undecaprenyl phosphate + UDP. It participates in glycolipid biosynthesis; 4-amino-4-deoxy-alpha-L-arabinose undecaprenyl phosphate biosynthesis; 4-amino-4-deoxy-alpha-L-arabinose undecaprenyl phosphate from UDP-4-deoxy-4-formamido-beta-L-arabinose and undecaprenyl phosphate: step 1/2. The protein operates within bacterial outer membrane biogenesis; lipopolysaccharide biosynthesis. Its function is as follows. Catalyzes the transfer of 4-deoxy-4-formamido-L-arabinose from UDP to undecaprenyl phosphate. The modified arabinose is attached to lipid A and is required for resistance to polymyxin and cationic antimicrobial peptides. The protein is Undecaprenyl-phosphate 4-deoxy-4-formamido-L-arabinose transferase of Yersinia pseudotuberculosis serotype IB (strain PB1/+).